A 211-amino-acid polypeptide reads, in one-letter code: Glutathione S-transferase class-mu 28 kDa isozyme (211 aa).

The 83-residue stretch at 4–86 (DHIKVIYFNG…YMAKKHHMMG (83 aa)) folds into the GST N-terminal domain. 8 residues coordinate glutathione: Tyr-10, Arg-16, Trp-41, Lys-45, Leu-53, Glu-70, Ser-71, and Asp-104. The 124-residue stretch at 88–211 (TEEEYYNVEK…YLSDRAATPF (124 aa)) folds into the GST C-terminal domain.

It belongs to the GST superfamily. Mu family. In terms of assembly, homodimer.

It catalyses the reaction RX + glutathione = an S-substituted glutathione + a halide anion + H(+). Its function is as follows. Conjugation of reduced glutathione to a wide number of exogenous and endogenous hydrophobic electrophiles. Functionally, GST isoenzymes appear to play a central role in the parasite detoxification system. Other functions are also suspected including a role in increasing the solubility of haematin in the parasite gut. This chain is Glutathione S-transferase class-mu 28 kDa isozyme, found in Schistosoma haematobium (Blood fluke).